An 863-amino-acid chain; its full sequence is Glycogen phosphorylase (863 aa).

An N6-(pyridoxal phosphate)lysine modification is found at K618.

Belongs to the glycogen phosphorylase family. The cofactor is pyridoxal 5'-phosphate.

The catalysed reaction is [(1-&gt;4)-alpha-D-glucosyl](n) + phosphate = [(1-&gt;4)-alpha-D-glucosyl](n-1) + alpha-D-glucose 1-phosphate. Functionally, phosphorylase is an important allosteric enzyme in carbohydrate metabolism. Enzymes from different sources differ in their regulatory mechanisms and in their natural substrates. However, all known phosphorylases share catalytic and structural properties. In Mycobacterium tuberculosis (strain ATCC 25618 / H37Rv), this protein is Glycogen phosphorylase (glgP).